The sequence spans 468 residues: ATP synthase subunit beta (468 aa).

An ATP-binding site is contributed by 155 to 162; sequence GGAGVGKT.

Belongs to the ATPase alpha/beta chains family. In terms of assembly, F-type ATPases have 2 components, CF(1) - the catalytic core - and CF(0) - the membrane proton channel. CF(1) has five subunits: alpha(3), beta(3), gamma(1), delta(1), epsilon(1). CF(0) has three main subunits: a(1), b(2) and c(9-12). The alpha and beta chains form an alternating ring which encloses part of the gamma chain. CF(1) is attached to CF(0) by a central stalk formed by the gamma and epsilon chains, while a peripheral stalk is formed by the delta and b chains.

The protein localises to the cell membrane. The catalysed reaction is ATP + H2O + 4 H(+)(in) = ADP + phosphate + 5 H(+)(out). Functionally, produces ATP from ADP in the presence of a proton gradient across the membrane. The catalytic sites are hosted primarily by the beta subunits. This chain is ATP synthase subunit beta, found in Streptococcus pneumoniae (strain ATCC BAA-255 / R6).